We begin with the raw amino-acid sequence, 247 residues long: Probable transcriptional regulatory protein Hhal_2210 (247 aa).

It belongs to the TACO1 family.

The protein localises to the cytoplasm. The protein is Probable transcriptional regulatory protein Hhal_2210 of Halorhodospira halophila (strain DSM 244 / SL1) (Ectothiorhodospira halophila (strain DSM 244 / SL1)).